Consider the following 954-residue polypeptide: Glycine dehydrogenase (decarboxylating) (954 aa).

Lys-704 is modified (N6-(pyridoxal phosphate)lysine).

The protein belongs to the GcvP family. The glycine cleavage system is composed of four proteins: P, T, L and H. Pyridoxal 5'-phosphate is required as a cofactor.

The catalysed reaction is N(6)-[(R)-lipoyl]-L-lysyl-[glycine-cleavage complex H protein] + glycine + H(+) = N(6)-[(R)-S(8)-aminomethyldihydrolipoyl]-L-lysyl-[glycine-cleavage complex H protein] + CO2. The glycine cleavage system catalyzes the degradation of glycine. The P protein binds the alpha-amino group of glycine through its pyridoxal phosphate cofactor; CO(2) is released and the remaining methylamine moiety is then transferred to the lipoamide cofactor of the H protein. This is Glycine dehydrogenase (decarboxylating) from Vibrio vulnificus (strain YJ016).